The chain runs to 22 residues: Cysteine-rich venom protein notescatin (22 aa).

Residues 1 to 15 (SNKKDYQKEIVDKHN) show a composition bias toward basic and acidic residues. The disordered stretch occupies residues 1 to 22 (SNKKDYQKEIVDKHNALRRSVK).

It belongs to the CRISP family. In terms of processing, contains 8 disulfide bonds. In terms of tissue distribution, expressed by the venom gland.

The protein localises to the secreted. The sequence is that of Cysteine-rich venom protein notescatin from Notechis scutatus scutatus (Mainland tiger snake).